Here is a 754-residue protein sequence, read N- to C-terminus: Gelsolin, cytoplasmic (754 aa).

Residues 1–120 (MVPAFEGAGA…RYLKGGVASG (120 aa)) form an actin-severing region. A Gelsolin-like 1 repeat occupies 22-71 (FEVVPYPKEKYGQFYQGDSYIVLYTRDVNGNLSWDLHFWLGSETSQDEAG). The segment at 68 to 71 (DEAG) is actin-actin interfilament contact point. Residues 101–108 (LFLSRFKK) and 133–141 (RLFHVKGRR) contribute to the a 1,2-diacyl-sn-glycero-3-phospho-(1D-myo-inositol-4,5-bisphosphate) site. A Gelsolin-like 2 repeat occupies 143–183 (IRIRQVEVGVGSMNKGDCFILDCGSQVYAYMGPSSRKMDRL). Positions 209–238 (TASGSEAGESSPGLGGGSPDDVADEDTGVD) are disordered. A compositionally biased stretch (low complexity) spans 210-220 (ASGSEAGESSP). Gelsolin-like repeat units follow at residues 266–306 (NMIG…KEKV), 414–463 (LKLE…DEKA), 538–580 (FDTR…EEKA), and 643–684 (LRVN…QEKE). Residues 386-751 (LLQKNAGPAF…MKAQVPETNA (366 aa)) are actin-binding, Ca-sensitive. Ca(2+) contacts are provided by Gly-430, Asp-431, Glu-461, Asp-556, Glu-578, Asp-659, Asp-660, and Glu-682.

Belongs to the villin/gelsolin family. As to expression, tail muscle.

It localises to the cytoplasm. The protein localises to the cytoskeleton. Functionally, calcium-regulated, actin-modulating protein that binds to the plus (or barbed) ends of actin monomers or filaments, preventing monomer exchange (end-blocking or capping). It can promote the assembly of monomers into filaments (nucleation) as well as sever filaments already formed. The protein is Gelsolin, cytoplasmic of Homarus americanus (American lobster).